Reading from the N-terminus, the 607-residue chain is Putative pentatricopeptide repeat-containing protein At1g09680 (607 aa).

9 PPR repeats span residues 239–273 (NVYV…SLQP), 274–308 (TVVS…RTRP), 309–343 (DVFT…GLIP), 344–378 (NDVI…GLQP), 379–413 (DIVL…GLRP), 414–448 (DKIT…GIEL), 449–483 (DRVG…GIKP), 484–518 (DDVT…GHVP), and 519–553 (SVVT…GVVP).

The protein belongs to the PPR family. P subfamily.

This chain is Putative pentatricopeptide repeat-containing protein At1g09680, found in Arabidopsis thaliana (Mouse-ear cress).